Here is an 849-residue protein sequence, read N- to C-terminus: Putative endoplasmic reticulum mannosidase MNL2 (849 aa).

Residues 1-12 (MSIARLVYSLFR) are Cytoplasmic-facing. A helical; Signal-anchor for type II membrane protein membrane pass occupies residues 13–32 (RVRSVLLLFITISLLFYYTF). At 33–849 (QNEIDILNSY…TQGGHIIKKK (817 aa)) the chain is on the lumenal side. A glycan (N-linked (GlcNAc...) asparagine) is linked at Asn45. Positions 56-79 (HNTEGSSKLDPPDLSSTGSDRIAT) are disordered. Cysteines 559 and 598 form a disulfide.

The protein belongs to the glycosyl hydrolase 47 family. Ca(2+) serves as cofactor.

It localises to the endoplasmic reticulum membrane. It functions in the pathway protein modification; protein glycosylation. Its function is as follows. Putative mannosidase involved in glycoprotein quality control since it is involved in the targeting of misfolded glycoproteins for ER-associated protein degradation (ERAD). The sequence is that of Putative endoplasmic reticulum mannosidase MNL2 (MNL2) from Saccharomyces cerevisiae (strain ATCC 204508 / S288c) (Baker's yeast).